A 432-amino-acid chain; its full sequence is Adenylosuccinate synthetase (432 aa).

GTP is bound by residues 13 to 19 (GDEGKGK) and 41 to 43 (GHT). The Proton acceptor role is filled by D14. Mg(2+)-binding residues include D14 and G41. Residues 14–17 (DEGK), 39–42 (NAGH), T130, R144, Q225, T240, and R304 each bind IMP. H42 functions as the Proton donor in the catalytic mechanism. 300 to 306 (ATTGRRR) is a binding site for substrate. GTP-binding positions include R306, 332-334 (KLD), and 415-417 (STG).

The protein belongs to the adenylosuccinate synthetase family. As to quaternary structure, homodimer. Mg(2+) serves as cofactor.

The protein resides in the cytoplasm. It carries out the reaction IMP + L-aspartate + GTP = N(6)-(1,2-dicarboxyethyl)-AMP + GDP + phosphate + 2 H(+). It participates in purine metabolism; AMP biosynthesis via de novo pathway; AMP from IMP: step 1/2. Functionally, plays an important role in the de novo pathway of purine nucleotide biosynthesis. Catalyzes the first committed step in the biosynthesis of AMP from IMP. This is Adenylosuccinate synthetase from Cronobacter sakazakii (strain ATCC BAA-894) (Enterobacter sakazakii).